The following is a 341-amino-acid chain: MTYRDAGVDIDAGNALVERIKPLVKRSFRPEVMGGLGGFGALFDLSGKYKEPVLVSGTDGVGTKLKLAQQLGRHDTIGIDLVGMCVNDVLVQGAEPLFFLDYFATGKLDVDTAAAVVGGIARGCELSGCALIGGETAEMPDMYPPGEYDLAGFTVGAVEKSQLLDGAQVREGDVLIGIASSGPHSNGYSLIRKIYERAGAPAEHVLDDGTKLIDALMAPTALYVKPVLALLKSHGEAIHAMAHITGGGLTENIIRVIPEGLGLEIDATAWTLPPVFAWLQREGAVADAEMWRTFNCGIGFVLVAAPAQAAALEQALDAQSLAHWRIGQVVTAHGDERVRIG.

The protein belongs to the AIR synthase family.

The protein localises to the cytoplasm. The enzyme catalyses 2-formamido-N(1)-(5-O-phospho-beta-D-ribosyl)acetamidine + ATP = 5-amino-1-(5-phospho-beta-D-ribosyl)imidazole + ADP + phosphate + H(+). It functions in the pathway purine metabolism; IMP biosynthesis via de novo pathway; 5-amino-1-(5-phospho-D-ribosyl)imidazole from N(2)-formyl-N(1)-(5-phospho-D-ribosyl)glycinamide: step 2/2. The sequence is that of Phosphoribosylformylglycinamidine cyclo-ligase from Xanthomonas axonopodis pv. citri (strain 306).